The chain runs to 220 residues: Fructose-6-phosphate aldolase (220 aa).

K85 (schiff-base intermediate with substrate) is an active-site residue.

The protein belongs to the transaldolase family. Type 3A subfamily. Homodecamer.

It localises to the cytoplasm. The catalysed reaction is beta-D-fructose 6-phosphate = dihydroxyacetone + D-glyceraldehyde 3-phosphate. In terms of biological role, catalyzes the reversible formation of fructose 6-phosphate from dihydroxyacetone and D-glyceraldehyde 3-phosphate via an aldolization reaction. The sequence is that of Fructose-6-phosphate aldolase from Salmonella heidelberg (strain SL476).